The following is a 982-amino-acid chain: Nitrate reductase [NADPH] (982 aa).

Residues 1–128 (MEAPALEQRQ…PPSTRLTTIL (128 aa)) are disordered. Basic and acidic residues predominate over residues 10–20 (QSLHDSSERQQ). The segment covering 63 to 110 (TASPTTTDFSSSSSDDNSTTLETSVNYSHSSNTNTNTSCPPSPITSSS) has biased composition (low complexity). C240 contributes to the Mo-molybdopterin binding site. Positions 617 to 692 (TRLITLEELR…MPTYHIGTLT (76 aa)) constitute a Cytochrome b5 heme-binding domain. Residues H652 and H675 each contribute to the heme site. Positions 721-836 (KTWNSAILTF…KGPVGKFVYQ (116 aa)) constitute an FAD-binding FR-type domain. Residues 776-779 (RAYT), 794-798 (LVKIY), 810-812 (QMT), S860, and T863 contribute to the FAD site. Residue 952–961 (MVLLCGPEGM) coordinates NADP(+).

This sequence belongs to the nitrate reductase family. In terms of assembly, homodimer. FAD serves as cofactor. Requires heme as cofactor. It depends on Mo-molybdopterin as a cofactor.

It catalyses the reaction nitrite + NADP(+) + H2O = nitrate + NADPH + H(+). The protein operates within nitrogen metabolism; nitrate reduction (assimilation). Nitrate reductase is a key enzyme involved in the first step of nitrate assimilation in plants, fungi and bacteria. The polypeptide is Nitrate reductase [NADPH] (nit-3) (Neurospora crassa (strain ATCC 24698 / 74-OR23-1A / CBS 708.71 / DSM 1257 / FGSC 987)).